We begin with the raw amino-acid sequence, 644 residues long: Protein SNOWY COTYLEDON 3 (644 aa).

3 disordered regions span residues 1 to 129 (MVAA…TRTE), 162 to 252 (ETAT…DGRL), and 290 to 414 (SDTD…SRVR). Over residues 53 to 77 (SPSPSHSTTTTTTTATSTSTSSSSS) the composition is skewed to low complexity. A compositionally biased stretch (polar residues) spans 91–112 (LSRTTNSASNLVYTPSSLPKRS). A compositionally biased stretch (basic and acidic residues) spans 172–190 (CTPERRRATPVRDQRENSK). 2 stretches are compositionally biased toward polar residues: residues 290-302 (SDTD…STNG) and 314-332 (TRSL…QETN). Composition is skewed to low complexity over residues 343–370 (SPQC…SSDS) and 397–412 (ATAT…SPSR). Residues 463-466 (QWRF) carry the QWRF motif motif.

This sequence belongs to the QWRF family. In terms of tissue distribution, expressed in young developing tissues, such as seedlings, roots, flowers, buds and young siliques, and to a lesser extent in mature green tissues.

Its subcellular location is the peroxisome. Functionally, probable microtubule-associated peroxisomal protein required for chloroplast biogenesis and for the formation of the prolamellar body and prothylakoids in etioplasts. Not involved in peroxisomal metabolism, including mobilization of storage compounds during germination, fatty acid beta-oxydation or photorespiration. The sequence is that of Protein SNOWY COTYLEDON 3 (SCO3) from Arabidopsis thaliana (Mouse-ear cress).